Consider the following 123-residue polypeptide: Large ribosomal subunit protein eL8 (123 aa).

Belongs to the eukaryotic ribosomal protein eL8 family. Part of the 50S ribosomal subunit. Probably part of the RNase P complex.

It is found in the cytoplasm. In terms of biological role, multifunctional RNA-binding protein that recognizes the K-turn motif in ribosomal RNA, the RNA component of RNase P, box H/ACA, box C/D and box C'/D' sRNAs. This chain is Large ribosomal subunit protein eL8, found in Pyrococcus abyssi (strain GE5 / Orsay).